The primary structure comprises 386 residues: ATP phosphoribosyltransferase regulatory subunit (386 aa).

This sequence belongs to the class-II aminoacyl-tRNA synthetase family. HisZ subfamily. Heteromultimer composed of HisG and HisZ subunits.

The protein resides in the cytoplasm. Its pathway is amino-acid biosynthesis; L-histidine biosynthesis; L-histidine from 5-phospho-alpha-D-ribose 1-diphosphate: step 1/9. Required for the first step of histidine biosynthesis. May allow the feedback regulation of ATP phosphoribosyltransferase activity by histidine. The sequence is that of ATP phosphoribosyltransferase regulatory subunit from Ralstonia nicotianae (strain ATCC BAA-1114 / GMI1000) (Ralstonia solanacearum).